Here is a 110-residue protein sequence, read N- to C-terminus: UPF0122 protein GWCH70_1086 (110 aa).

It belongs to the UPF0122 family.

Functionally, might take part in the signal recognition particle (SRP) pathway. This is inferred from the conservation of its genetic proximity to ftsY/ffh. May be a regulatory protein. The chain is UPF0122 protein GWCH70_1086 from Geobacillus sp. (strain WCH70).